Reading from the N-terminus, the 433-residue chain is Histone acetyltransferase type B subunit 2 (433 aa).

WD repeat units follow at residues 131 to 171 (EHPG…LDPT), 184 to 224 (GHEA…ADSR), 234 to 274 (HHTQ…TNKA), 281 to 321 (GHLD…EKVH), and 325 to 365 (GHND…EEQL). The segment at 367 to 371 (DDQDD) is interaction with the histone H4 N-terminus. The WD 6 repeat unit spans residues 382 to 422 (GHTNHLADFSWNPNEPWLVASAAEDNLLQIWKVAESIVGKD).

This sequence belongs to the WD repeat RBAP46/RBAP48/MSI1 family. In terms of assembly, component of the HAT-B complex composed of at least HAT1 and HAT2. The HAT-B complex binds to histone H4 tail.

The protein resides in the cytoplasm. It is found in the nucleus. Regulatory subunit of the histone acetylase B (HAT-B) complex. The complex acetylates 'Lys-12' of histone H4 which is required for telomeric silencing. The chain is Histone acetyltransferase type B subunit 2 (HAT2) from Gibberella zeae (strain ATCC MYA-4620 / CBS 123657 / FGSC 9075 / NRRL 31084 / PH-1) (Wheat head blight fungus).